Here is a 382-residue protein sequence, read N- to C-terminus: FK506-binding protein 4 (382 aa).

The tract at residues 139-274 (GLEVDEEIES…KEEPKKKITK (136 aa)) is disordered. The segment covering 141 to 173 (EVDEEIESDEEVESDEEIESDEEIESEEEEEEP) has biased composition (acidic residues). Basic and acidic residues-rich tracts occupy residues 180 to 190 (RPAEEVKEIAS) and 196 to 270 (EKKE…EPKK). The region spanning 295–382 (GQRVGMRYIG…VFDVKLLSMK (88 aa)) is the PPIase FKBP-type domain.

This sequence belongs to the FKBP-type PPIase family. FKBP3/4 subfamily. As to quaternary structure, binds to histones H3 and H4.

It is found in the nucleus. The catalysed reaction is [protein]-peptidylproline (omega=180) = [protein]-peptidylproline (omega=0). Inhibited by both FK506 and rapamycin. PPIase that acts as a histone chaperone. Histone proline isomerase that increases the rate of cis-trans isomerization at prolines on the histone H3 N-terminal tail. Proline isomerization influences H3 methylation thereby regulating gene expression. The protein is FK506-binding protein 4 (FKBP4) of Rhizopus delemar (strain RA 99-880 / ATCC MYA-4621 / FGSC 9543 / NRRL 43880) (Mucormycosis agent).